A 328-amino-acid polypeptide reads, in one-letter code: Ferredoxin--NADP reductase (328 aa).

FAD-binding residues include S14, E33, Q41, Y46, I90, and F126.

It belongs to the ferredoxin--NADP reductase type 2 family. In terms of assembly, homodimer. Requires FAD as cofactor.

The enzyme catalyses 2 reduced [2Fe-2S]-[ferredoxin] + NADP(+) + H(+) = 2 oxidized [2Fe-2S]-[ferredoxin] + NADPH. This chain is Ferredoxin--NADP reductase, found in Mycoplasmoides gallisepticum (strain R(low / passage 15 / clone 2)) (Mycoplasma gallisepticum).